The primary structure comprises 182 residues: Crossover junction endodeoxyribonuclease RuvC (182 aa).

Catalysis depends on residues Asp-7, Glu-69, and Asp-141. Mg(2+)-binding residues include Asp-7, Glu-69, and Asp-141.

The protein belongs to the RuvC family. As to quaternary structure, homodimer which binds Holliday junction (HJ) DNA. The HJ becomes 2-fold symmetrical on binding to RuvC with unstacked arms; it has a different conformation from HJ DNA in complex with RuvA. In the full resolvosome a probable DNA-RuvA(4)-RuvB(12)-RuvC(2) complex forms which resolves the HJ. Requires Mg(2+) as cofactor.

Its subcellular location is the cytoplasm. The enzyme catalyses Endonucleolytic cleavage at a junction such as a reciprocal single-stranded crossover between two homologous DNA duplexes (Holliday junction).. In terms of biological role, the RuvA-RuvB-RuvC complex processes Holliday junction (HJ) DNA during genetic recombination and DNA repair. Endonuclease that resolves HJ intermediates. Cleaves cruciform DNA by making single-stranded nicks across the HJ at symmetrical positions within the homologous arms, yielding a 5'-phosphate and a 3'-hydroxyl group; requires a central core of homology in the junction. The consensus cleavage sequence is 5'-(A/T)TT(C/G)-3'. Cleavage occurs on the 3'-side of the TT dinucleotide at the point of strand exchange. HJ branch migration catalyzed by RuvA-RuvB allows RuvC to scan DNA until it finds its consensus sequence, where it cleaves and resolves the cruciform DNA. This is Crossover junction endodeoxyribonuclease RuvC from Variovorax paradoxus (strain S110).